The following is a 561-amino-acid chain: Ribulokinase (561 aa).

Belongs to the ribulokinase family.

It catalyses the reaction D-ribulose + ATP = D-ribulose 5-phosphate + ADP + H(+). It carries out the reaction L-ribulose + ATP = L-ribulose 5-phosphate + ADP + H(+). It participates in carbohydrate degradation; L-arabinose degradation via L-ribulose; D-xylulose 5-phosphate from L-arabinose (bacterial route): step 2/3. The protein is Ribulokinase of Shouchella clausii (strain KSM-K16) (Alkalihalobacillus clausii).